The following is a 273-amino-acid chain: MSSPDIVGILENTKELDRLRKDQEEVLVEINKMHKKLQASPEIVEKPGDISLAKLKNLYIQAKELSENEVTVSNILLTQLDLLLPYGPTGQQRRKLGVVAEGNDQKRKRMKVDSDVIRLSPSMRNQIEAYASLKGEQVAARVTAESADKDEWFVVKVIHFDRETKEVEVLDEEPGDDEEGSGQRTYKLPMLCILPFPKRNDPSNTQEFPPGKHVLAVYPGTTALYKATVVSTPRKRKSDEYLLEFDDDEEDGALPQRTVPFHKVVALPEGHRQ.

In terms of domain architecture, SGF29 C-terminal spans 128–273 (EAYASLKGEQ…VVALPEGHRQ (146 aa)). Histone H3K4me3 N-terminus binding regions lie at residues 171 to 173 (DEE) and 220 to 223 (GTTA). The interval 245–248 (FDDD) is histone H3K4me3 binding.

It belongs to the SGF29 family. Expressed in roots, rosette leaves, cauline leaves, stems and flowers.

The protein resides in the nucleus. Functionally, chromatin reader component of the transcription regulatory histone acetylation (HAT) complex SAGA. In Arabidopsis thaliana (Mouse-ear cress), this protein is SAGA-associated factor 29 homolog B.